The chain runs to 590 residues: MSSISINIAMPLNSLHNFERKPSKAWSTSCTAPAARLRASSSLQQEKPHQIRRSGDYQPSLWDFNYIQSLNTPYKEQRHFNRQAELIMQVRMLLKVKMEAIQQLELIDDLQYLGLSYFFQDEIKQILSSIHNEPRYFHNNDLYFTALGFRILRQHGFNVSEDVFDCFKIEKCSDFNANLAQDTKGMLQLYEASFLLREGEDTLELARRFSTRSLREKFDEGGDEIDEDLSSWIRHSLDLPLHWRVQGLEARWFLDAYARRPDMNPLIFKLAKLNFNIVQATYQEELKDISRWWNSSCLAEKLPFVRDRIVECFFWAIAAFEPHQYSYQRKMAAVIITFITIIDDVYDVYGTIEELELLTDMIRRWDNKSISQLPYYMQVCYLALYNFVSERAYDILKDQHFNSIPYLQRSWVSLVEGYLKEAYWYYNGYKPSLEEYLNNAKISISAPTIISQLYFTLANSIDETAIESLYQYHNILYLSGTILRLADDLGTSQHELERGDVPKAIQCYMNDTNASEREAVEHVKFLIREAWKEMNTVTTASDCPFTDDLVAAAANLARAAQFIYLDGDGHGVQHSEIHQQMGGLLFQPYV.

A chloroplast-targeting transit peptide spans 1-51 (MSSISINIAMPLNSLHNFERKPSKAWSTSCTAPAARLRASSSLQQEKPHQI). Residues aspartate 343, aspartate 347, aspartate 487, threonine 491, and glutamate 495 each contribute to the Mg(2+) site. The DDXXD motif motif lies at 343–347 (DDVYD).

The protein belongs to the terpene synthase family. As to quaternary structure, monomer. Mg(2+) is required as a cofactor.

It is found in the plastid. It localises to the chloroplast. It catalyses the reaction (2E)-geranyl diphosphate = (1R,5R)-sabinene + diphosphate. The protein operates within terpene metabolism; sabinene hydrate biosynthesis. In terms of biological role, catalyzes the formation of the (-)-3-isothujone precursor sabinene from geranyl diphosphate. The enzyme also produces significant amounts of gamma-terpinene, terpinolene and limonene. The sequence is that of (+)-sabinene synthase, chloroplastic from Salvia officinalis (Sage).